Reading from the N-terminus, the 341-residue chain is Phenylalanine--tRNA ligase alpha subunit (341 aa).

Position 254 (Glu-254) interacts with Mg(2+).

It belongs to the class-II aminoacyl-tRNA synthetase family. Phe-tRNA synthetase alpha subunit type 1 subfamily. As to quaternary structure, tetramer of two alpha and two beta subunits. Requires Mg(2+) as cofactor.

The protein resides in the cytoplasm. The catalysed reaction is tRNA(Phe) + L-phenylalanine + ATP = L-phenylalanyl-tRNA(Phe) + AMP + diphosphate + H(+). The sequence is that of Phenylalanine--tRNA ligase alpha subunit from Chlorobaculum tepidum (strain ATCC 49652 / DSM 12025 / NBRC 103806 / TLS) (Chlorobium tepidum).